Consider the following 514-residue polypeptide: 2,3-bisphosphoglycerate-independent phosphoglycerate mutase (514 aa).

Residues Asp-14 and Ser-64 each coordinate Mn(2+). Ser-64 (phosphoserine intermediate) is an active-site residue. Substrate is bound by residues His-125, 155-156, Arg-187, Arg-193, 263-266, and Lys-336; these read RD and RADR. Mn(2+)-binding residues include Asp-403, His-407, Asp-444, His-445, and His-463.

Belongs to the BPG-independent phosphoglycerate mutase family. Monomer. It depends on Mn(2+) as a cofactor.

The catalysed reaction is (2R)-2-phosphoglycerate = (2R)-3-phosphoglycerate. The protein operates within carbohydrate degradation; glycolysis; pyruvate from D-glyceraldehyde 3-phosphate: step 3/5. Functionally, catalyzes the interconversion of 2-phosphoglycerate and 3-phosphoglycerate. The protein is 2,3-bisphosphoglycerate-independent phosphoglycerate mutase of Salmonella paratyphi B (strain ATCC BAA-1250 / SPB7).